A 356-amino-acid polypeptide reads, in one-letter code: 3-dehydroquinate synthase (356 aa).

NAD(+) is bound by residues G106 to D110, T130 to T131, K143, and K152. E185, H248, and H265 together coordinate Zn(2+).

Belongs to the sugar phosphate cyclases superfamily. Dehydroquinate synthase family. It depends on Co(2+) as a cofactor. Zn(2+) is required as a cofactor. The cofactor is NAD(+).

The protein localises to the cytoplasm. The catalysed reaction is 7-phospho-2-dehydro-3-deoxy-D-arabino-heptonate = 3-dehydroquinate + phosphate. It functions in the pathway metabolic intermediate biosynthesis; chorismate biosynthesis; chorismate from D-erythrose 4-phosphate and phosphoenolpyruvate: step 2/7. In terms of biological role, catalyzes the conversion of 3-deoxy-D-arabino-heptulosonate 7-phosphate (DAHP) to dehydroquinate (DHQ). This chain is 3-dehydroquinate synthase, found in Thermoanaerobacter sp. (strain X514).